A 394-amino-acid polypeptide reads, in one-letter code: [Pyruvate dehydrogenase (acetyl-transferring)] kinase 1, mitochondrial (394 aa).

Residues 1 to 20 (MWKIMRSWKCGGMRWAHRQR) constitute a mitochondrion transit peptide. In terms of domain architecture, Histidine kinase spans 126-386 (AYPYELHNPP…DVYIKLKGPS (261 aa)). Histidine 148 is modified (phosphohistidine; by autocatalysis). Residues 267–274 (EVFKNAFE), aspartate 304, 323–324 (ST), and 347–352 (GMGFGL) contribute to the ATP site.

Belongs to the PDK/BCKDK protein kinase family. In terms of assembly, interacts with PKP2.

The protein localises to the mitochondrion matrix. The catalysed reaction is L-seryl-[pyruvate dehydrogenase E1 alpha subunit] + ATP = O-phospho-L-seryl-[pyruvate dehydrogenase E1 alpha subunit] + ADP + H(+). Its function is as follows. Inhibits the mitochondrial pyruvate dehydrogenase complex by phosphorylation of the E1 alpha subunit (PDA1), thus contributing to the regulation of glucose metabolism. Also involved in telomere maintenance. This Saccharomyces cerevisiae (strain ATCC 204508 / S288c) (Baker's yeast) protein is [Pyruvate dehydrogenase (acetyl-transferring)] kinase 1, mitochondrial.